The chain runs to 144 residues: NADH dehydrogenase [ubiquinone] 1 alpha subcomplex subunit 13 (144 aa).

At Ala-2 the chain carries N-acetylalanine. The chain crosses the membrane as a helical span at residues 30–51 (LSGYSMLAIGIGTLIYGHWSIM).

This sequence belongs to the complex I NDUFA13 subunit family. Complex I is composed of 45 different subunits. Interacts with CARD15, but not with CARD4. Interacts with STAT3, but not with STAT1, STAT2 and STAT5A. Interacts with OLFM4.

It localises to the mitochondrion inner membrane. Its subcellular location is the nucleus. In terms of biological role, accessory subunit of the mitochondrial membrane respiratory chain NADH dehydrogenase (Complex I), that is believed not to be involved in catalysis. Complex I functions in the transfer of electrons from NADH to the respiratory chain. The immediate electron acceptor for the enzyme is believed to be ubiquinone. Involved in the interferon/all-trans-retinoic acid (IFN/RA) induced cell death. This apoptotic activity is inhibited by interaction with viral IRF1. Prevents the transactivation of STAT3 target genes. May play a role in CARD15-mediated innate mucosal responses and serve to regulate intestinal epithelial cell responses to microbes. The polypeptide is NADH dehydrogenase [ubiquinone] 1 alpha subcomplex subunit 13 (NDUFA13) (Pan troglodytes (Chimpanzee)).